The chain runs to 275 residues: Phosphate import ATP-binding protein PstB (275 aa).

An ABC transporter domain is found at 29-270; that stretch reads LEIKDLDLYY…PNKKKTEDYI (242 aa). 61 to 68 contributes to the ATP binding site; it reads GPSGCGKS.

This sequence belongs to the ABC transporter superfamily. Phosphate importer (TC 3.A.1.7) family. As to quaternary structure, the complex is composed of two ATP-binding proteins (PstB), two transmembrane proteins (PstC and PstA) and a solute-binding protein (PstS).

It is found in the cell inner membrane. It catalyses the reaction phosphate(out) + ATP + H2O = ADP + 2 phosphate(in) + H(+). In terms of biological role, part of the ABC transporter complex PstSACB involved in phosphate import. Responsible for energy coupling to the transport system. The protein is Phosphate import ATP-binding protein PstB of Pseudoalteromonas translucida (strain TAC 125).